A 222-amino-acid polypeptide reads, in one-letter code: Eukaryotic translation initiation factor 3 subunit K (222 aa).

In terms of domain architecture, PCI spans 46 to 208 (YDLEANLAVL…KIKTKNITEK (163 aa)).

It belongs to the eIF-3 subunit K family. Component of the eukaryotic translation initiation factor 3 (eIF-3) complex. The eIF-3 complex interacts with pix.

The protein resides in the cytoplasm. Functionally, component of the eukaryotic translation initiation factor 3 (eIF-3) complex, which is involved in protein synthesis of a specialized repertoire of mRNAs and, together with other initiation factors, stimulates binding of mRNA and methionyl-tRNAi to the 40S ribosome. The eIF-3 complex specifically targets and initiates translation of a subset of mRNAs involved in cell proliferation. The chain is Eukaryotic translation initiation factor 3 subunit K from Drosophila sechellia (Fruit fly).